The sequence spans 526 residues: UDP-N-acetylmuramoyl-L-alanyl-D-glutamate--2,6-diaminopimelate ligase (526 aa).

Leucine 48 and serine 50 together coordinate UDP-N-acetyl-alpha-D-muramoyl-L-alanyl-D-glutamate. ATP is bound at residue 136 to 142 (GTSGKTT). UDP-N-acetyl-alpha-D-muramoyl-L-alanyl-D-glutamate is bound by residues 178–179 (TT), serine 205, and arginine 213. Lysine 245 carries the N6-carboxylysine modification. Meso-2,6-diaminopimelate is bound by residues arginine 408, 432-435 (DNPR), glycine 490, and glutamate 494. Residues 432–435 (DNPR) carry the Meso-diaminopimelate recognition motif motif.

The protein belongs to the MurCDEF family. MurE subfamily. The cofactor is Mg(2+). Post-translationally, carboxylation is probably crucial for Mg(2+) binding and, consequently, for the gamma-phosphate positioning of ATP.

It localises to the cytoplasm. It carries out the reaction UDP-N-acetyl-alpha-D-muramoyl-L-alanyl-D-glutamate + meso-2,6-diaminopimelate + ATP = UDP-N-acetyl-alpha-D-muramoyl-L-alanyl-gamma-D-glutamyl-meso-2,6-diaminopimelate + ADP + phosphate + H(+). It participates in cell wall biogenesis; peptidoglycan biosynthesis. Catalyzes the addition of meso-diaminopimelic acid to the nucleotide precursor UDP-N-acetylmuramoyl-L-alanyl-D-glutamate (UMAG) in the biosynthesis of bacterial cell-wall peptidoglycan. The protein is UDP-N-acetylmuramoyl-L-alanyl-D-glutamate--2,6-diaminopimelate ligase of Corynebacterium efficiens (strain DSM 44549 / YS-314 / AJ 12310 / JCM 11189 / NBRC 100395).